Here is a 405-residue protein sequence, read N- to C-terminus: Nuclear RNA export factor 2 (405 aa).

Residues 1 to 33 form a disordered region; it reads MRGQNRRGYRNIEGRLSLSSHSSHSSPRQTHVT. The segment covering 16-26 has biased composition (low complexity); that stretch reads LSLSSHSSHSS. The RRM domain maps to 26–94; that stretch reads SPRQTHVTNL…SVVLQHIGYK (69 aa). LRR repeat units lie at residues 97–118 and 123–144; these read RISGISFSNNRLCHLDHLSSLS and FLKFLDLSHNQISSGEELKKLG. The region spanning 215–382 is the NTF2 domain; it reads LVEEFIITYY…VAIVSDQLFI (168 aa).

The protein belongs to the NXF family.

It localises to the nucleus. Functionally, involved in the export of cellular mRNA to the cytoplasm. Plays a role in the nuclear retention of unspliced mRNAs. This is Nuclear RNA export factor 2 from Caenorhabditis elegans.